Reading from the N-terminus, the 199-residue chain is MSRVLIIESSARQQDSVSRQLTQTFISQWKAAHPADQITVRDLAVNPVPHLDINLLGGWMKSAEQRNDSEQASLDRSNELTDELLAADVLVMAAPMYNFAIPSTLKAWLDHVLRAGVTFKYTETGPQGLLSGKRAYVLTARGGIYAGGPADHQEPYLRQVMGFIGINDVTFIHAEGMNLGGDFQEKGLNQANAKLSQVA.

Residues serine 10, 16–18, and 96–99 each bind FMN; these read SVS and MYNF.

This sequence belongs to the azoreductase type 1 family. Homodimer. The cofactor is FMN.

The catalysed reaction is 2 a quinone + NADH + H(+) = 2 a 1,4-benzosemiquinone + NAD(+). It catalyses the reaction N,N-dimethyl-1,4-phenylenediamine + anthranilate + 2 NAD(+) = 2-(4-dimethylaminophenyl)diazenylbenzoate + 2 NADH + 2 H(+). Functionally, quinone reductase that provides resistance to thiol-specific stress caused by electrophilic quinones. Its function is as follows. Also exhibits azoreductase activity. Catalyzes the reductive cleavage of the azo bond in aromatic azo compounds to the corresponding amines. This Pseudomonas fluorescens (strain Pf0-1) protein is FMN-dependent NADH:quinone oxidoreductase 2.